The chain runs to 525 residues: GMP synthase [glutamine-hydrolyzing] (525 aa).

Positions 8-207 (KILILDFGSQ…ALDICGCDAN (200 aa)) constitute a Glutamine amidotransferase type-1 domain. Cysteine 85 serves as the catalytic Nucleophile. Residues histidine 181 and glutamate 183 contribute to the active site. Residues 208 to 400 (WKPSSIIEDA…LGLPYDMLYR (193 aa)) enclose the GMPS ATP-PPase domain. 235–241 (SGGVDSS) is an ATP binding site.

As to quaternary structure, homodimer.

It carries out the reaction XMP + L-glutamine + ATP + H2O = GMP + L-glutamate + AMP + diphosphate + 2 H(+). It functions in the pathway purine metabolism; GMP biosynthesis; GMP from XMP (L-Gln route): step 1/1. Its function is as follows. Catalyzes the synthesis of GMP from XMP. This is GMP synthase [glutamine-hydrolyzing] from Shewanella piezotolerans (strain WP3 / JCM 13877).